A 523-amino-acid polypeptide reads, in one-letter code: Frizzled-4 (523 aa).

Residues 1 to 22 (MGARSLTLLYLLCCLVVGLIAG) form the signal peptide. Over 23–198 (FGEEEERSCD…KCGYDSGLYN (176 aa)) the chain is Extracellular. Residues 26 to 147 (EEERSCDPIR…NDHNHMCMEG (122 aa)) form the FZ domain. 8 disulfide bridges follow: Cys-31/Cys-92, Cys-39/Cys-85, Cys-76/Cys-114, Cys-103/Cys-144, Cys-107/Cys-131, Cys-167/Cys-186, Cys-190/Cys-268, and Cys-288/Cys-363. N-linked (GlcNAc...) asparagine glycosylation is present at Asn-45. Residue Asn-130 is glycosylated (N-linked (GlcNAc...) asparagine). The chain crosses the membrane as a helical span at residues 199 to 229 (RLSKEFTDIWMAVWASLCFISTAFTVLTFLI). The Cytoplasmic segment spans residues 230–235 (DSSRFC). A helical membrane pass occupies residues 236–261 (YPERPIIFLSMCYNIYSIAYIVRLTV). Residues 262-285 (GRERISCDFEEAAEPVLIQEGLKN) are Extracellular-facing. Residues 286–319 (TGCAIIFLLMYFFGMASSIWWVILTLTWFLAAGL) traverse the membrane as a helical segment. Over 320–322 (KWG) the chain is Cytoplasmic. Residues 323 to 351 (HEAIEMHSSYFHIAAWAIPAVKTIVILIM) traverse the membrane as a helical segment. The Extracellular segment spans residues 352-369 (RLVDADELTGLCYVGNQN). Residues 370-396 (IDALTGFVVAPLFTYLVIGTLFIAAGL) traverse the membrane as a helical segment. Topologically, residues 397-417 (VALFKIRSNLQKDGTKTDKLE) are cytoplasmic. A helical membrane pass occupies residues 418-443 (RLMVKIGVFSVLYTVPATCVIACYFY). The Extracellular segment spans residues 444–459 (EVSNWNVFRYTADDSN). The chain crosses the membrane as a helical span at residues 460–481 (MAVEMLNIFMSLLVGITSGMWI). Over 482-523 (WSAKTLHTWQKCTNRLVNSGKVKRKKRVDGWVKPGKGNETVV) the chain is Cytoplasmic. The Lys-Thr-X-X-X-Trp motif, mediates interaction with the PDZ domain of Dvl family members motif lies at 485-490 (KTLHTW). The PDZ-binding signature appears at 521–523 (TVV).

This sequence belongs to the G-protein coupled receptor Fz/Smo family. Interacts (via FZ domain) with tsku; tsku competes with wnt2b for binding to fzd4, inhibiting Wnt signaling and repressing peripheral eye development.

Its subcellular location is the cell membrane. Functionally, receptor for Wnt proteins. Most frizzled receptors are coupled to the beta-catenin canonical signaling pathway, which leads to the activation of disheveled proteins, inhibition of GSK-3 kinase, nuclear accumulation of beta-catenin and activation of Wnt target genes. A second signaling pathway involving PKC and calcium fluxes has been seen for some family members, but it is not yet clear if it represents a distinct pathway or if it can be integrated in the canonical pathway, as PKC seems to be required for Wnt-mediated inactivation of GSK-3 kinase. Both pathways seem to involve interactions with G-proteins. May be involved in transduction and intercellular transmission of polarity information during tissue morphogenesis and/or in differentiated tissues. Activated by Wnt5A. The chain is Frizzled-4 (fzd4) from Xenopus laevis (African clawed frog).